Consider the following 242-residue polypeptide: tRNA pseudouridine synthase A (242 aa).

Catalysis depends on aspartate 51, which acts as the Nucleophile. Tyrosine 107 contributes to the substrate binding site.

It belongs to the tRNA pseudouridine synthase TruA family. In terms of assembly, homodimer.

It carries out the reaction uridine(38/39/40) in tRNA = pseudouridine(38/39/40) in tRNA. Its function is as follows. Formation of pseudouridine at positions 38, 39 and 40 in the anticodon stem and loop of transfer RNAs. The chain is tRNA pseudouridine synthase A from Helicobacter pylori (strain J99 / ATCC 700824) (Campylobacter pylori J99).